A 331-amino-acid chain; its full sequence is Large ribosomal subunit protein uL3 (331 aa).

The protein belongs to the universal ribosomal protein uL3 family. In terms of assembly, part of the 50S ribosomal subunit. Forms a cluster with proteins L14 and L24e.

Functionally, one of the primary rRNA binding proteins, it binds directly near the 3'-end of the 23S rRNA, where it nucleates assembly of the 50S subunit. The chain is Large ribosomal subunit protein uL3 from Thermoplasma acidophilum (strain ATCC 25905 / DSM 1728 / JCM 9062 / NBRC 15155 / AMRC-C165).